A 266-amino-acid chain; its full sequence is Zinc transporter ZupT (266 aa).

Helical transmembrane passes span 8–28, 35–55, 70–90, 123–143, 152–172, 185–205, 209–229, and 246–266; these read LALTLLAGISTGIGSLLALMV, FLTFALGFSAGIMLYVSFVEI, HAAGWITTAAFFGGMLFIWLI, GIFTAAAIAIHNFPEGLAVFF, GVVIAATIALHNIPEGMAVAV, FSYSFLSGLAEPLGAIIGYAL, FLSPLVFACVLGGVAGIMVYI, and IAISGLILGMGVMAVSLLMLA. The Fe(2+) site is built by N134 and E137. 2 residues coordinate Zn(2+): E137 and H162. Residues N163, E166, and E195 each contribute to the Fe(2+) site. A Zn(2+)-binding site is contributed by E166.

This sequence belongs to the ZIP transporter (TC 2.A.5) family. ZupT subfamily.

It localises to the cell inner membrane. The catalysed reaction is Zn(2+)(in) = Zn(2+)(out). Its function is as follows. Mediates zinc uptake. May also transport other divalent cations. The protein is Zinc transporter ZupT of Chlorobium limicola (strain DSM 245 / NBRC 103803 / 6330).